A 206-amino-acid polypeptide reads, in one-letter code: uncharacterized protein (206 aa).

A helical membrane pass occupies residues 21–43 (VPINITMSICALTALLKSYSITG).

The protein resides in the membrane. This is an uncharacterized protein from Acanthamoeba polyphaga (Amoeba).